A 452-amino-acid chain; its full sequence is Glycine receptor subunit alpha-2 (452 aa).

The first 27 residues, 1–27 (MNRQLVNILTALFAFFLGTNHFREAFC), serve as a signal peptide directing secretion. Residues 28–256 (KDHDSRSGKH…KFHLERQMGY (229 aa)) lie on the Extracellular side of the membrane. Asn-72 carries N-linked (GlcNAc...) asparagine glycosylation. A glycine-binding site is contributed by Arg-99. Arg-99 contributes to the strychnine binding site. The N-linked (GlcNAc...) asparagine glycan is linked to Asn-103. Ser-163 serves as a coordination point for glycine. Cys-172 and Cys-186 are joined by a disulfide. The Zn(2+) site is built by Glu-226 and Glu-228. The cysteines at positions 232 and 243 are disulfide-linked. Thr-238 serves as a coordination point for glycine. His-249 serves as a coordination point for Zn(2+). A helical membrane pass occupies residues 257 to 278 (YLIQMYIPSLLIVILSWVSFWI). Over 279–283 (NMDAA) the chain is Cytoplasmic. The chain crosses the membrane as a helical span at residues 284–304 (PARVALGITTVLTMTTQSSGS). At 305–315 (RASLPKVSYVK) the chain is on the extracellular side. A helical membrane pass occupies residues 316–336 (AIDIWMAVCLLFVFAALLEYA). Residues 337–420 (AVNFVSRQHK…FVDRAKRIDT (84 aa)) lie on the Cytoplasmic side of the membrane. A helical transmembrane segment spans residues 421 to 441 (ISRAAFPLAFLIFNIFYWITY). At 442–452 (KIIRHEDVHKK) the chain is on the extracellular side.

It belongs to the ligand-gated ion channel (TC 1.A.9) family. Glycine receptor (TC 1.A.9.3) subfamily. GLRA2 sub-subfamily. As to quaternary structure, interacts with GLRB. Heteropentamer composed of GLRA2 and GLRB; functional GLRB-GLRA2 heteropentamers contain four GLRA2 subunits and one GLRB subunit, although alternative subunit composition cannot be excluded. Homopentamer (in vitro). Both homopentamers and heteropentamers form functional ion channels, but their characteristics are subtly different.

It localises to the postsynaptic cell membrane. The protein localises to the synapse. The protein resides in the cell membrane. Its subcellular location is the cell projection. The catalysed reaction is chloride(in) = chloride(out). Its activity is regulated as follows. Channel opening is triggered by extracellular glycine. Channel opening is also triggered by taurine and beta-alanine. Inhibited by strychnine. Inhibited by picrotoxin. In terms of biological role, subunit of heteromeric glycine-gated chloride channels. Plays a role in synaptic plasticity. Contributes to the generation of inhibitory postsynaptic currents, and is involved in the down-regulation of neuronal excitability. Plays a role in cellular responses to ethanol. This is Glycine receptor subunit alpha-2 from Rattus norvegicus (Rat).